The following is a 570-amino-acid chain: Transmembrane 7 superfamily member 3 (570 aa).

Residues 1–21 (MGFLQLLVVAVLASEHRVAGA) form the signal peptide. N-linked (GlcNAc...) asparagine glycans are attached at residues Asn-27, Asn-61, Asn-75, Asn-87, and Asn-264. Transmembrane regions (helical) follow at residues 296 to 313 (VFFT…FFGH), 320 to 342 (LFFI…LTPI), 347 to 369 (NLIL…WWRF), 371 to 393 (ILSI…VTFF), 408 to 430 (FWVT…LRIL), 437 to 459 (VIGS…SYIT), and 479 to 501 (PFQT…GITL).

As to expression, widely expressed. Highly expressed in kidney and pancreas.

Its subcellular location is the cell membrane. Functionally, involved in the inhibition of cytokine-induced death of pancreatic beta cells. Involved in the promotion of insulin secretion from pancreatic beta cells. Is a downstream transcriptional target of p53/TP53, and acts as a pro-survival homeostatic factor that attenuates the development of cellular stress. Maintains protein homeostasis and promotes cell survival through attenuation of endoplasmic reticulum (ER) stress and the subsequent induction of unfolded protein response (UPR). The sequence is that of Transmembrane 7 superfamily member 3 (TM7SF3) from Homo sapiens (Human).